We begin with the raw amino-acid sequence, 479 residues long: Cobyric acid synthase (479 aa).

A GATase cobBQ-type domain is found at 250–442 (TRTVAVVAYP…LHGLFEDAAA (193 aa)). C331 serves as the catalytic Nucleophile. The active site involves H434.

This sequence belongs to the CobB/CobQ family. CobQ subfamily.

It functions in the pathway cofactor biosynthesis; adenosylcobalamin biosynthesis. Functionally, catalyzes amidations at positions B, D, E, and G on adenosylcobyrinic A,C-diamide. NH(2) groups are provided by glutamine, and one molecule of ATP is hydrogenolyzed for each amidation. In Variovorax paradoxus (strain S110), this protein is Cobyric acid synthase.